Reading from the N-terminus, the 165-residue chain is uncharacterized protein (165 aa).

Residues 28–139 (QNALKDTGLA…KPNEREEAVK (112 aa)) form the Cupin type-1 domain.

This is an uncharacterized protein from Bacillus subtilis (strain 168).